The chain runs to 394 residues: Elongation factor Tu (394 aa).

Residues 10-204 (KPHINIGTIG…AVDDNIPTPE (195 aa)) enclose the tr-type G domain. The G1 stretch occupies residues 19-26 (GHVDHGKT). 19–26 (GHVDHGKT) provides a ligand contact to GTP. Thr26 lines the Mg(2+) pocket. The G2 stretch occupies residues 60-64 (GITIN). The tract at residues 81–84 (DCPG) is G3. GTP contacts are provided by residues 81–85 (DCPGH) and 136–139 (NKID). The segment at 136–139 (NKID) is G4. The interval 174 to 176 (SAL) is G5.

The protein belongs to the TRAFAC class translation factor GTPase superfamily. Classic translation factor GTPase family. EF-Tu/EF-1A subfamily. Monomer.

The protein localises to the cytoplasm. It carries out the reaction GTP + H2O = GDP + phosphate + H(+). Functionally, GTP hydrolase that promotes the GTP-dependent binding of aminoacyl-tRNA to the A-site of ribosomes during protein biosynthesis. This Chlamydia caviae (strain ATCC VR-813 / DSM 19441 / 03DC25 / GPIC) (Chlamydophila caviae) protein is Elongation factor Tu.